The primary structure comprises 500 residues: Carnosic acid synthase (500 aa).

A helical transmembrane segment spans residues 4 to 24; it reads LILLSLAFLASCVVAYSRRRP. C443 lines the heme pocket.

Belongs to the cytochrome P450 family. Heme serves as cofactor. As to expression, expressed in leaf glandular trichomes.

Its subcellular location is the membrane. The catalysed reaction is 11-hydroxyferruginol + 3 reduced [NADPH--hemoprotein reductase] + 3 O2 = carnosate + 3 oxidized [NADPH--hemoprotein reductase] + 4 H2O + 4 H(+). The enzyme catalyses miltiradiene + 2 reduced [NADPH--hemoprotein reductase] + 2 O2 = miltiradien-20-al + 2 oxidized [NADPH--hemoprotein reductase] + 3 H2O + 2 H(+). It catalyses the reaction ferruginol + 3 reduced [NADPH--hemoprotein reductase] + 3 O2 = pisiferate + 3 oxidized [NADPH--hemoprotein reductase] + 4 H2O + 4 H(+). The protein operates within secondary metabolite biosynthesis; terpenoid biosynthesis. Monooxygenase involved in the biosynthesis of carnosate, a potent antioxidant labdane-related diterpene natural product. Catalyzes the oxidation of 11-hydroxyferruginol to produce carnosate. Mediates the conversion of miltiradien into miltiradien-20-al. Also involved in the production of pisiferic acid and derivative products from ferruginol. The sequence is that of Carnosic acid synthase from Salvia pomifera (Apple sage).